The chain runs to 477 residues: MSRLSRALQLTDIDDFITPSQICIKPVQIDKARSKTGAKIKIKGDGCFEESESGNLKLNKVDISLQDCLACSGCITSAEEVLITQQSREELLKVLQENSKNKASEDWDNVRTIVFTLATQPILSLAYRYQIGVEDAARHLNGYFRSLGADYVLSTKVADDIALLECRQEFVDRYRENENLTMLSSSCPGWVCYAEKTHGNFLLPYVSTTRSPQQIMGVLVKQILADKMNVPASRIYHVTVMPCYDKKLEASREDFFSKANNSRDVDCVITSVEVEQLLSEAQQPLSQYDLLDLDWPWSNVRPEFMVWAHEKTLSGGYAEHIFKYAAKHIFNEDLKTELEFKQLKNRDFREIILKQNGKTVLKFAIANGFRNIQNLVQKLKREKVSNYHFVEVMACPSGCINGGAQIRPTTGQHVRELTRKLEELYQNLPRSEPENSLTKHIYNDFLDGFQSDKSYDVLHTRYHDVVSELSISLNINW.

Residues Cys-23, Cys-68, Cys-71, Cys-74, Cys-187, Cys-243, Cys-395, and Cys-399 each coordinate [4Fe-4S] cluster.

The protein belongs to the NARF family.

Functionally, component of the cytosolic iron-sulfur (Fe/S) protein assembly machinery. Required for maturation of extramitochondrial Fe/S proteins. The polypeptide is Probable cytosolic Fe-S cluster assembly factor CG17683 (Drosophila melanogaster (Fruit fly)).